The chain runs to 368 residues: Phosphoserine aminotransferase (368 aa).

R42 lines the L-glutamate pocket. Pyridoxal 5'-phosphate is bound by residues 76–77, W102, T152, D179, and Q202; that span reads AS. K203 is subject to N6-(pyridoxal phosphate)lysine. Pyridoxal 5'-phosphate is bound at residue 245 to 246; the sequence is NT.

The protein belongs to the class-V pyridoxal-phosphate-dependent aminotransferase family. SerC subfamily. In terms of assembly, homodimer. The cofactor is pyridoxal 5'-phosphate.

Its subcellular location is the cytoplasm. The enzyme catalyses O-phospho-L-serine + 2-oxoglutarate = 3-phosphooxypyruvate + L-glutamate. It catalyses the reaction 4-(phosphooxy)-L-threonine + 2-oxoglutarate = (R)-3-hydroxy-2-oxo-4-phosphooxybutanoate + L-glutamate. It functions in the pathway amino-acid biosynthesis; L-serine biosynthesis; L-serine from 3-phospho-D-glycerate: step 2/3. The protein operates within cofactor biosynthesis; pyridoxine 5'-phosphate biosynthesis; pyridoxine 5'-phosphate from D-erythrose 4-phosphate: step 3/5. In terms of biological role, catalyzes the reversible conversion of 3-phosphohydroxypyruvate to phosphoserine and of 3-hydroxy-2-oxo-4-phosphonooxybutanoate to phosphohydroxythreonine. This chain is Phosphoserine aminotransferase, found in Nitrosomonas europaea (strain ATCC 19718 / CIP 103999 / KCTC 2705 / NBRC 14298).